The following is a 160-amino-acid chain: Cyclic pyranopterin monophosphate synthase (160 aa).

Substrate is bound by residues 76 to 78 (LCH) and 114 to 115 (ME). D129 is a catalytic residue.

It belongs to the MoaC family. Homohexamer; trimer of dimers.

It carries out the reaction (8S)-3',8-cyclo-7,8-dihydroguanosine 5'-triphosphate = cyclic pyranopterin phosphate + diphosphate. The protein operates within cofactor biosynthesis; molybdopterin biosynthesis. Catalyzes the conversion of (8S)-3',8-cyclo-7,8-dihydroguanosine 5'-triphosphate to cyclic pyranopterin monophosphate (cPMP). This is Cyclic pyranopterin monophosphate synthase from Mesorhizobium japonicum (strain LMG 29417 / CECT 9101 / MAFF 303099) (Mesorhizobium loti (strain MAFF 303099)).